Consider the following 336-residue polypeptide: Ketol-acid reductoisomerase (NADP(+)) (336 aa).

A KARI N-terminal Rossmann domain is found at 2 to 182; that stretch reads AKIYYQQDCN…GGARAGVLET (181 aa). Residues 25 to 28, S51, S53, and 83 to 86 contribute to the NADP(+) site; these read YGSQ and DEKQ. H108 is a catalytic residue. Residue G134 participates in NADP(+) binding. One can recognise a KARI C-terminal knotted domain in the interval 183 to 328; that stretch reads TFREETETDL…AELRGLMSWT (146 aa). 4 residues coordinate Mg(2+): D191, E195, E227, and E231. S252 serves as a coordination point for substrate.

This sequence belongs to the ketol-acid reductoisomerase family. It depends on Mg(2+) as a cofactor.

It catalyses the reaction (2R)-2,3-dihydroxy-3-methylbutanoate + NADP(+) = (2S)-2-acetolactate + NADPH + H(+). The catalysed reaction is (2R,3R)-2,3-dihydroxy-3-methylpentanoate + NADP(+) = (S)-2-ethyl-2-hydroxy-3-oxobutanoate + NADPH + H(+). It functions in the pathway amino-acid biosynthesis; L-isoleucine biosynthesis; L-isoleucine from 2-oxobutanoate: step 2/4. It participates in amino-acid biosynthesis; L-valine biosynthesis; L-valine from pyruvate: step 2/4. Involved in the biosynthesis of branched-chain amino acids (BCAA). Catalyzes an alkyl-migration followed by a ketol-acid reduction of (S)-2-acetolactate (S2AL) to yield (R)-2,3-dihydroxy-isovalerate. In the isomerase reaction, S2AL is rearranged via a Mg-dependent methyl migration to produce 3-hydroxy-3-methyl-2-ketobutyrate (HMKB). In the reductase reaction, this 2-ketoacid undergoes a metal-dependent reduction by NADPH to yield (R)-2,3-dihydroxy-isovalerate. The protein is Ketol-acid reductoisomerase (NADP(+)) of Lachnoclostridium phytofermentans (strain ATCC 700394 / DSM 18823 / ISDg) (Clostridium phytofermentans).